The primary structure comprises 64 residues: H/ACA ribonucleoprotein complex subunit 3 (64 aa).

It belongs to the NOP10 family. In terms of assembly, component of the box H/ACA small nucleolar ribonucleoprotein (H/ACA snoRNP) complex consisting of Nop60B, Gar1, NPH2 and Nop10, and associated with H/ACA-type snoRNAs.

The protein localises to the nucleus. Its subcellular location is the nucleolus. Its function is as follows. Component of the box H/ACA small nucleolar ribonucleoprotein (H/ACA snoRNP) complex, which catalyzes pseudouridylation of rRNA. This involves the isomerization of uridine such that the ribose is subsequently attached to C5, instead of the normal N1. Pseudouridine ('psi') residues may serve to stabilize the conformation of rRNAs. Required for ribosome biogenesis. H/ACA snoRNP complex-dependent ribosome biogenesis is important in female germline cell differentiation during oogenesis. In Drosophila melanogaster (Fruit fly), this protein is H/ACA ribonucleoprotein complex subunit 3.